Consider the following 2138-residue polypeptide: DNA polymerase epsilon catalytic subunit B (2138 aa).

A Nuclear localization signal 1 motif is present at residues 1224 to 1231; sequence EKRKWKMT. 4 residues coordinate Zn(2+): Cys2015, Cys2018, Cys2040, and Cys2045. A CysA-type zinc finger spans residues 2015-2045; the sequence is CSNCGAYRDLDFCRDSALLTEKEWSCADPQC. [4Fe-4S] cluster is bound by residues Cys2076, Cys2079, Cys2091, and Cys2093. The CysB motif motif lies at 2076–2093; it reads CNRCNQVKAAHLTEQCEC. Positions 2107 to 2114 match the Nuclear localization signal 2 motif; that stretch reads HKRIEIFL.

Belongs to the DNA polymerase type-B family. As to quaternary structure, heterotetramer. [4Fe-4S] cluster serves as cofactor. Mostly expressed at low levels in inflorescence (floral meristem and flowers until anthesis), and, to a lower extent, in seeds.

The protein resides in the nucleus. The catalysed reaction is DNA(n) + a 2'-deoxyribonucleoside 5'-triphosphate = DNA(n+1) + diphosphate. In terms of biological role, DNA polymerase II, which participates in chromosomal DNA replication. Involved in the determination of cell fate during plant embryogenesis. Contributes to the flowering time repression. This is DNA polymerase epsilon catalytic subunit B (POL2B) from Arabidopsis thaliana (Mouse-ear cress).